We begin with the raw amino-acid sequence, 356 residues long: Histidinol-phosphate aminotransferase (356 aa).

An N6-(pyridoxal phosphate)lysine modification is found at lysine 214.

It belongs to the class-II pyridoxal-phosphate-dependent aminotransferase family. Histidinol-phosphate aminotransferase subfamily. Homodimer. The cofactor is pyridoxal 5'-phosphate.

The catalysed reaction is L-histidinol phosphate + 2-oxoglutarate = 3-(imidazol-4-yl)-2-oxopropyl phosphate + L-glutamate. Its pathway is amino-acid biosynthesis; L-histidine biosynthesis; L-histidine from 5-phospho-alpha-D-ribose 1-diphosphate: step 7/9. This is Histidinol-phosphate aminotransferase from Escherichia coli (strain 55989 / EAEC).